The following is a 368-amino-acid chain: UDP-N-acetylglucosamine--N-acetylmuramyl-(pentapeptide) pyrophosphoryl-undecaprenol N-acetylglucosamine transferase (368 aa).

UDP-N-acetyl-alpha-D-glucosamine contacts are provided by residues 10–12, Asn126, Ser200, Ile255, and Gln300; that span reads TGG.

Belongs to the glycosyltransferase 28 family. MurG subfamily.

The protein resides in the cell membrane. The enzyme catalyses Mur2Ac(oyl-L-Ala-gamma-D-Glu-L-Lys-D-Ala-D-Ala)-di-trans,octa-cis-undecaprenyl diphosphate + UDP-N-acetyl-alpha-D-glucosamine = beta-D-GlcNAc-(1-&gt;4)-Mur2Ac(oyl-L-Ala-gamma-D-Glu-L-Lys-D-Ala-D-Ala)-di-trans,octa-cis-undecaprenyl diphosphate + UDP + H(+). It participates in cell wall biogenesis; peptidoglycan biosynthesis. Cell wall formation. Catalyzes the transfer of a GlcNAc subunit on undecaprenyl-pyrophosphoryl-MurNAc-pentapeptide (lipid intermediate I) to form undecaprenyl-pyrophosphoryl-MurNAc-(pentapeptide)GlcNAc (lipid intermediate II). This Lactobacillus helveticus (strain DPC 4571) protein is UDP-N-acetylglucosamine--N-acetylmuramyl-(pentapeptide) pyrophosphoryl-undecaprenol N-acetylglucosamine transferase.